We begin with the raw amino-acid sequence, 249 residues long: 1-(5-phosphoribosyl)-5-[(5-phosphoribosylamino)methylideneamino] imidazole-4-carboxamide isomerase (249 aa).

Asp8 acts as the Proton acceptor in catalysis. The Proton donor role is filled by Asp129.

It belongs to the HisA/HisF family.

It is found in the cytoplasm. The enzyme catalyses 1-(5-phospho-beta-D-ribosyl)-5-[(5-phospho-beta-D-ribosylamino)methylideneamino]imidazole-4-carboxamide = 5-[(5-phospho-1-deoxy-D-ribulos-1-ylimino)methylamino]-1-(5-phospho-beta-D-ribosyl)imidazole-4-carboxamide. Its pathway is amino-acid biosynthesis; L-histidine biosynthesis; L-histidine from 5-phospho-alpha-D-ribose 1-diphosphate: step 4/9. The polypeptide is 1-(5-phosphoribosyl)-5-[(5-phosphoribosylamino)methylideneamino] imidazole-4-carboxamide isomerase (Magnetococcus marinus (strain ATCC BAA-1437 / JCM 17883 / MC-1)).